Consider the following 279-residue polypeptide: Tryptophan synthase alpha chain (279 aa).

Residues glutamate 50 and aspartate 61 each act as proton acceptor in the active site.

Belongs to the TrpA family. In terms of assembly, tetramer of two alpha and two beta chains.

It carries out the reaction (1S,2R)-1-C-(indol-3-yl)glycerol 3-phosphate + L-serine = D-glyceraldehyde 3-phosphate + L-tryptophan + H2O. The protein operates within amino-acid biosynthesis; L-tryptophan biosynthesis; L-tryptophan from chorismate: step 5/5. Its function is as follows. The alpha subunit is responsible for the aldol cleavage of indoleglycerol phosphate to indole and glyceraldehyde 3-phosphate. This is Tryptophan synthase alpha chain from Brucella melitensis biotype 2 (strain ATCC 23457).